The following is a 240-amino-acid chain: Ribonuclease PH (240 aa).

Residues Arg86 and Gly124–Arg126 contribute to the phosphate site.

This sequence belongs to the RNase PH family. Homohexameric ring arranged as a trimer of dimers.

It catalyses the reaction tRNA(n+1) + phosphate = tRNA(n) + a ribonucleoside 5'-diphosphate. Phosphorolytic 3'-5' exoribonuclease that plays an important role in tRNA 3'-end maturation. Removes nucleotide residues following the 3'-CCA terminus of tRNAs; can also add nucleotides to the ends of RNA molecules by using nucleoside diphosphates as substrates, but this may not be physiologically important. Probably plays a role in initiation of 16S rRNA degradation (leading to ribosome degradation) during starvation. The polypeptide is Ribonuclease PH (Mannheimia succiniciproducens (strain KCTC 0769BP / MBEL55E)).